The following is a 150-amino-acid chain: Large ribosomal subunit protein bL9 (150 aa).

This sequence belongs to the bacterial ribosomal protein bL9 family.

Binds to the 23S rRNA. The polypeptide is Large ribosomal subunit protein bL9 (Corynebacterium kroppenstedtii (strain DSM 44385 / JCM 11950 / CIP 105744 / CCUG 35717)).